We begin with the raw amino-acid sequence, 850 residues long: Bifunctional uridylyltransferase/uridylyl-removing enzyme (850 aa).

The uridylyltransferase stretch occupies residues 1-317; it reads MSARPFADLR…LFPVVAPPLP (317 aa). The uridylyl-removing stretch occupies residues 318 to 673; sequence IDDDFQLRAG…ARLSPAGEGI (356 aa). Residues 436-558 form the HD domain; it reads VDEHILTVLR…VGDTRRLDAL (123 aa). ACT domains are found at residues 674-755 and 783-850; these read QVMV…AVQP and VLSI…GVLG.

Belongs to the GlnD family. Mg(2+) is required as a cofactor.

The catalysed reaction is [protein-PII]-L-tyrosine + UTP = [protein-PII]-uridylyl-L-tyrosine + diphosphate. It catalyses the reaction [protein-PII]-uridylyl-L-tyrosine + H2O = [protein-PII]-L-tyrosine + UMP + H(+). Uridylyltransferase (UTase) activity is inhibited by glutamine, while glutamine activates uridylyl-removing (UR) activity. Its function is as follows. Modifies, by uridylylation and deuridylylation, the PII regulatory proteins (GlnB and homologs), in response to the nitrogen status of the cell that GlnD senses through the glutamine level. Under low glutamine levels, catalyzes the conversion of the PII proteins and UTP to PII-UMP and PPi, while under higher glutamine levels, GlnD hydrolyzes PII-UMP to PII and UMP (deuridylylation). Thus, controls uridylylation state and activity of the PII proteins, and plays an important role in the regulation of nitrogen assimilation and metabolism. The sequence is that of Bifunctional uridylyltransferase/uridylyl-removing enzyme from Thiobacillus denitrificans (strain ATCC 25259 / T1).